The primary structure comprises 588 residues: Adenine deaminase (588 aa).

This sequence belongs to the metallo-dependent hydrolases superfamily. Adenine deaminase family. The cofactor is Mn(2+).

The enzyme catalyses adenine + H2O + H(+) = hypoxanthine + NH4(+). The polypeptide is Adenine deaminase (Desulforamulus reducens (strain ATCC BAA-1160 / DSM 100696 / MI-1) (Desulfotomaculum reducens)).